Here is a 486-residue protein sequence, read N- to C-terminus: Hexosaminidase D (486 aa).

Glu149 acts as the Proton donor in catalysis.

Belongs to the glycosyl hydrolase 20 family. As to quaternary structure, homodimer; disulfide-linked. Expressed in synovial fibroblasts and synovial membranes.

It localises to the cytoplasm. The protein localises to the nucleus. Its subcellular location is the extracellular vesicle. The enzyme catalyses Hydrolysis of terminal non-reducing N-acetyl-D-hexosamine residues in N-acetyl-beta-D-hexosaminides.. Its activity is regulated as follows. Inhibited by O-(2-acetamido-2-deoxy-D-glucopyranosylidene)amino N-phenylcarbamate (PUGNAc). Inhibited by galacto-NAG-thiazoline. Has hexosaminidase activity. Responsible for the cleavage of the monosaccharides N-acetylglucosamine (GlcNAc) and N-acetylgalactosamine (GalNAc) from cellular substrates. Has a preference for galactosaminide over glucosaminide substrates. The chain is Hexosaminidase D from Homo sapiens (Human).